Reading from the N-terminus, the 200-residue chain is MLRWFSFGSNEGSEVAGNGWSVKPIGNMSIKKDDPVGFPQGYQCLLKVIIQLEKKDPTKSDVSELIAGWVKRYSGPHLLERLIKALIILTVPKLSRENIDNHVKLGGLFEGQVTFHFSSRDLIPTKYLSYATSIRTTVKGIYSYLSIEAELNPSSHQGTSVAKLLRASDVAKYYDNTLQSIFSQFEIKNVTITDDQIIFN.

Homomultimer. Interacts with viral nucleocapsid.

It localises to the virion membrane. Its subcellular location is the host endomembrane system. It is found in the host nucleus membrane. Functionally, plays a major role in assembly and budding of virion, by recruiting cellular partners of the ESCRT complexes that play a key role in releasing the budding particle from the host membrane. Condensates the ribonucleocapsid core during virus assembly. The chain is Matrix protein (M) from Tupaia (TUPV).